We begin with the raw amino-acid sequence, 1135 residues long: DNA-directed RNA polymerase I subunit RPA2 (1135 aa).

Residues 1 to 26 are disordered; it reads MDVDGRWRNLPSGPSLKHLTDPSYGI. Position 180 (R180) interacts with RNA. Residues 194 to 208 are loop B; the sequence is VRPKWKSRGLGYTQF. The loop A stretch occupies residues 236–247; it reads LNFIYRKELFFL. RNA is bound at residue D367. Fork loop regions lie at residues 439–453 and 474–489; these read LRSKTGLGFLQDSGL and RGAAFAKMRTTTVRRL. Mg(2+) is bound at residue D755. K890 contributes to the RNA binding site. Residues K1020 and R1036 each contribute to the DNA site. S1051 carries the post-translational modification Phosphoserine. Positions 1070, 1073, 1098, and 1101 each coordinate Zn(2+). A C4-type zinc finger spans residues 1070–1101; that stretch reads CVECGSLLSPLLEKPPPSWSAMRNRKYNCTVC.

It belongs to the RNA polymerase beta chain family. In terms of assembly, component of the RNA polymerase I (Pol I) complex consisting of 13 subunits: a ten-subunit catalytic core composed of POLR1A/RPA1, POLR1B/RPA2, POLR1C/RPAC1, POLR1D/RPAC2, POLR1H/RPA12, POLR2E/RPABC1, POLR2F/RPABC2, POLR2H/RPABC3, POLR2K/RPABC4 and POLR2L/RPABC5; a mobile stalk subunit POLR1F/RPA43 protruding from the core and additional subunits homologous to general transcription factors POLR1E/RPA49 and POLR1G/RPA34. Part of Pol I pre-initiation complex (PIC), in which Pol I core assembles with RRN3 and promoter-bound UTBF and SL1/TIF-IB complex. It depends on Mg(2+) as a cofactor.

The protein localises to the nucleus. It localises to the nucleolus. Its subcellular location is the chromosome. It carries out the reaction RNA(n) + a ribonucleoside 5'-triphosphate = RNA(n+1) + diphosphate. Catalytic core component of RNA polymerase I (Pol I), a DNA-dependent RNA polymerase which synthesizes ribosomal RNA precursors using the four ribonucleoside triphosphates as substrates. Transcribes 47S pre-rRNAs from multicopy rRNA gene clusters, giving rise to 5.8S, 18S and 28S ribosomal RNAs. Pol I-mediated transcription cycle proceeds through transcription initiation, transcription elongation and transcription termination stages. During transcription initiation, Pol I pre-initiation complex (PIC) is recruited by the selectivity factor 1 (SL1/TIF-IB) complex bound to the core promoter that precedes an rDNA repeat unit. The PIC assembly bends the promoter favoring the formation of the transcription bubble and promoter escape. Once the polymerase has escaped from the promoter it enters the elongation phase during which RNA is actively polymerized, based on complementarity with the template DNA strand. Highly processive, assembles in structures referred to as 'Miller trees' where many elongating Pol I complexes queue and transcribe the same rDNA coding regions. At terminator sequences downstream of the rDNA gene, PTRF interacts with Pol I and halts Pol I transcription leading to the release of the RNA transcript and polymerase from the DNA. Forms Pol I active center together with the largest subunit POLR1A/RPA1. Appends one nucleotide at a time to the 3' end of the nascent RNA, with POLR1A/RPA1 contributing a Mg(2+)-coordinating DxDGD motif, and POLR1B/RPA2 participating in the coordination of a second Mg(2+) ion and providing lysine residues believed to facilitate Watson-Crick base pairing between the incoming nucleotide and the template base. Typically, Mg(2+) ions direct a 5' nucleoside triphosphate to form a phosphodiester bond with the 3' hydroxyl of the preceding nucleotide of the nascent RNA, with the elimination of pyrophosphate. Has proofreading activity: Pauses and backtracks to allow the cleavage of a missincorporated nucleotide via POLR1H/RPA12. High Pol I processivity is associated with decreased transcription fidelity. The sequence is that of DNA-directed RNA polymerase I subunit RPA2 from Mus musculus (Mouse).